The chain runs to 206 residues: MPIGVPRVVFRNPGDPISSWVDIYNRLYRERLLFLGQGIGTELSNQLIGLMLYLSMEDENKDLYLFVNSPGGWVIPGIAIYDTMQFVRPDIHTICLGLAASMGSFILAGGQLTKRIAFPHARVMIHEPYSGFYMAQVGEFVLEAIEMAKLRETLTRVYAEKTGQPVWVIHEDMERDIFMSATEAQAYGIVDFVAVQGKEHGFHADL.

The active-site Nucleophile is Ser101. His126 is an active-site residue.

Belongs to the peptidase S14 family. In terms of assembly, component of the chloroplastic Clp protease core complex.

Its subcellular location is the plastid. It is found in the chloroplast stroma. It catalyses the reaction Hydrolysis of proteins to small peptides in the presence of ATP and magnesium. alpha-casein is the usual test substrate. In the absence of ATP, only oligopeptides shorter than five residues are hydrolyzed (such as succinyl-Leu-Tyr-|-NHMec, and Leu-Tyr-Leu-|-Tyr-Trp, in which cleavage of the -Tyr-|-Leu- and -Tyr-|-Trp bonds also occurs).. Cleaves peptides in various proteins in a process that requires ATP hydrolysis. Has a chymotrypsin-like activity. Plays a major role in the degradation of misfolded proteins. In Solanum lycopersicum (Tomato), this protein is ATP-dependent Clp protease proteolytic subunit.